We begin with the raw amino-acid sequence, 102 residues long: MAPRRISVSETSRPVLPRHARLKFDETRQRWVILAPERVLAPDEIAVEILQLCDGARDVAAIIDALAVRYTADRAEIGRDVVAMLQDLADKGFLTEARETTP.

Belongs to the PqqD family. As to quaternary structure, monomer. Interacts with PqqE.

Its pathway is cofactor biosynthesis; pyrroloquinoline quinone biosynthesis. Functions as a PqqA binding protein and presents PqqA to PqqE, in the pyrroloquinoline quinone (PQQ) biosynthetic pathway. In Rhodopseudomonas palustris (strain TIE-1), this protein is PqqA binding protein.